The chain runs to 596 residues: Aspartate--tRNA(Asp/Asn) ligase (596 aa).

Glutamate 182 contacts L-aspartate. The aspartate stretch occupies residues 206-209; that stretch reads QLFK. Residue arginine 228 coordinates L-aspartate. Residues 228-230 and glutamine 237 contribute to the ATP site; that span reads RDE. An L-aspartate-binding site is contributed by histidine 456. Glutamate 490 contributes to the ATP binding site. Residue arginine 497 participates in L-aspartate binding. 542–545 lines the ATP pocket; the sequence is GLDR.

This sequence belongs to the class-II aminoacyl-tRNA synthetase family. Type 1 subfamily. As to quaternary structure, homodimer.

The protein resides in the cytoplasm. The enzyme catalyses tRNA(Asx) + L-aspartate + ATP = L-aspartyl-tRNA(Asx) + AMP + diphosphate. Aspartyl-tRNA synthetase with relaxed tRNA specificity since it is able to aspartylate not only its cognate tRNA(Asp) but also tRNA(Asn). Reaction proceeds in two steps: L-aspartate is first activated by ATP to form Asp-AMP and then transferred to the acceptor end of tRNA(Asp/Asn). The protein is Aspartate--tRNA(Asp/Asn) ligase of Syntrophotalea carbinolica (strain DSM 2380 / NBRC 103641 / GraBd1) (Pelobacter carbinolicus).